The sequence spans 296 residues: Vacuolar histidine transporter YPQ3 (296 aa).

Residues 1–12 (MKLIPIILNAKN) lie on the Vacuolar side of the membrane. Positions 10 to 76 (AKNLSGMAGS…QNLLPTMIIL (67 aa)) constitute a PQ-loop 1 domain. A helical transmembrane segment spans residues 13 to 33 (LSGMAGSISICCWIVVFVPQI). The Cytoplasmic portion of the chain corresponds to 34–44 (YENFRRQSAEG). A helical membrane pass occupies residues 45-65 (LSLLFIVLWLLGDIFNVMGAM). Over 66–68 (MQN) the chain is Vacuolar. A helical transmembrane segment spans residues 69–89 (LLPTMIILAAYYTLADLILLI). Over 90 to 163 (QCMWYDKEKK…RTIVVKEREN (74 aa)) the chain is Cytoplasmic. Residues 164–184 (FFNDFLIVSGVLIAGILSWYI) form a helical membrane-spanning segment. Residues 185–199 (SYCSGLDNGIPKKKP) are Vacuolar-facing. The helical transmembrane segment at 200–220 (AFEQINLPAQILGYLSAILYL) threads the bilayer. The 63-residue stretch at 208-270 (AQILGYLSAI…ASWLIGSAGT (63 aa)) folds into the PQ-loop 2 domain. The Cytoplasmic portion of the chain corresponds to 221–238 (GSRIPQIVLNFKRKSCEG). The chain crosses the membrane as a helical span at residues 239–259 (VSFLFFLFACLGNTSFIISVL). At 260 to 262 (SAS) the chain is on the vacuolar side. The chain crosses the membrane as a helical span at residues 263 to 283 (WLIGSAGTLLMDFTVFIQFFL). Over 284-296 (YAKPKYEKILIDN) the chain is Cytoplasmic.

The protein belongs to the laat-1 family.

Its subcellular location is the vacuole membrane. The protein localises to the mitochondrion membrane. In terms of biological role, amino acid transporter that moves histidine into the vacuole. May also contribute to low affinity arginine import into the vacuole. May function as an amino acid/proton antiporter. The protein is Vacuolar histidine transporter YPQ3 of Saccharomyces cerevisiae (strain ATCC 204508 / S288c) (Baker's yeast).